Consider the following 464-residue polypeptide: ATP synthase subunit beta (464 aa).

152–159 serves as a coordination point for ATP; sequence GGAGVGKS.

This sequence belongs to the ATPase alpha/beta chains family. As to quaternary structure, F-type ATPases have 2 components, CF(1) - the catalytic core - and CF(0) - the membrane proton channel. CF(1) has five subunits: alpha(3), beta(3), gamma(1), delta(1), epsilon(1). CF(0) has three main subunits: a(1), b(2) and c(9-12). The alpha and beta chains form an alternating ring which encloses part of the gamma chain. CF(1) is attached to CF(0) by a central stalk formed by the gamma and epsilon chains, while a peripheral stalk is formed by the delta and b chains.

It is found in the cell membrane. The enzyme catalyses ATP + H2O + 4 H(+)(in) = ADP + phosphate + 5 H(+)(out). Produces ATP from ADP in the presence of a proton gradient across the membrane. The catalytic sites are hosted primarily by the beta subunits. This chain is ATP synthase subunit beta, found in Protochlamydia amoebophila (strain UWE25).